Consider the following 35-residue polypeptide: Somatostatin (35 aa).

Cys24 and Cys35 are oxidised to a cystine.

The protein belongs to the somatostatin family.

The protein resides in the secreted. Somatostatin inhibits the release of somatotropin. In Lampetra fluviatilis (European river lamprey), this protein is Somatostatin (sst).